A 133-amino-acid polypeptide reads, in one-letter code: Large ribosomal subunit protein uL22 (133 aa).

The protein belongs to the universal ribosomal protein uL22 family. As to quaternary structure, part of the 50S ribosomal subunit.

This protein binds specifically to 23S rRNA; its binding is stimulated by other ribosomal proteins, e.g. L4, L17, and L20. It is important during the early stages of 50S assembly. It makes multiple contacts with different domains of the 23S rRNA in the assembled 50S subunit and ribosome. Functionally, the globular domain of the protein is located near the polypeptide exit tunnel on the outside of the subunit, while an extended beta-hairpin is found that lines the wall of the exit tunnel in the center of the 70S ribosome. This chain is Large ribosomal subunit protein uL22, found in Aquifex pyrophilus.